We begin with the raw amino-acid sequence, 124 residues long: Fluoride-specific ion channel FluC (124 aa).

The next 4 helical transmembrane spans lie at 1 to 21, 35 to 55, 68 to 88, and 99 to 119; these read MGVVFAVALGGAIGSALRFLL, VGTLFVNLVGAFFIGFFFAYL, LLITGLLGGLTTFSTYSYESF, and FLAYTLGTNVLGIFFTFLGYI. 2 residues coordinate Na(+): G75 and T78.

It belongs to the fluoride channel Fluc/FEX (TC 1.A.43) family.

Its subcellular location is the cell inner membrane. The enzyme catalyses fluoride(in) = fluoride(out). With respect to regulation, na(+) is not transported, but it plays an essential structural role and its presence is essential for fluoride channel function. In terms of biological role, fluoride-specific ion channel. Important for reducing fluoride concentration in the cell, thus reducing its toxicity. This is Fluoride-specific ion channel FluC from Aquifex aeolicus (strain VF5).